The chain runs to 253 residues: uncharacterized protein (253 aa).

I17, S36, D62, N89, Y158, K162, V191, and T193 together coordinate NADP(+). Y158 (proton donor) is an active-site residue. K162 serves as the catalytic Lowers pKa of active site Tyr.

This sequence belongs to the short-chain dehydrogenases/reductases (SDR) family.

The protein resides in the cytoplasm. It is found in the nucleus. This is an uncharacterized protein from Schizosaccharomyces pombe (strain 972 / ATCC 24843) (Fission yeast).